We begin with the raw amino-acid sequence, 429 residues long: MIELDINASDKSLSHRAVIFSLLAQKPCVVRNFLMGEDCLSSLEIAQNLGAKVENTAKNSFKITPPTAIKEPSKILNCNNSGTSMRLYSGLLSAQKGLFVLSGDNSLNSRPMKRIIEPLKAFEARILGREDNHFAPLVIVGSPLKACNYESPIASAQVKSAFILSALQAQGSSTYKENELSRNHTEIMLKSLGADIQDQNGVLMVSPLEKPLEAFDFTIANDPSSAFFFALACAITPKSRLLLKNVLLNPTRIGAFEALKKMGASIEYAIQSKNLEMIGDIYIEHAPLKAINIEQNIASLIDEIPALSIAMLFAKGKSMVRNAKDLRAKESDRIKAVVSNFKALGIECEEFEDGFYVEGLEDISPLKQRFSQKKPPLIKSFNDHRIAMSFAVLTLALPLEIDNLECANISFPQFKRLLNLFKKGSLNGN.

3-phosphoshikimate-binding residues include lysine 11, serine 12, and arginine 16. Residue lysine 11 participates in phosphoenolpyruvate binding. Glycine 82 and arginine 110 together coordinate phosphoenolpyruvate. 4 residues coordinate 3-phosphoshikimate: serine 155, glutamine 157, aspartate 302, and lysine 329. Residue glutamine 157 participates in phosphoenolpyruvate binding. Aspartate 302 functions as the Proton acceptor in the catalytic mechanism. Residues arginine 333 and arginine 385 each contribute to the phosphoenolpyruvate site.

This sequence belongs to the EPSP synthase family. In terms of assembly, monomer.

It localises to the cytoplasm. It carries out the reaction 3-phosphoshikimate + phosphoenolpyruvate = 5-O-(1-carboxyvinyl)-3-phosphoshikimate + phosphate. The protein operates within metabolic intermediate biosynthesis; chorismate biosynthesis; chorismate from D-erythrose 4-phosphate and phosphoenolpyruvate: step 6/7. Catalyzes the transfer of the enolpyruvyl moiety of phosphoenolpyruvate (PEP) to the 5-hydroxyl of shikimate-3-phosphate (S3P) to produce enolpyruvyl shikimate-3-phosphate and inorganic phosphate. This chain is 3-phosphoshikimate 1-carboxyvinyltransferase, found in Helicobacter pylori (strain P12).